A 220-amino-acid chain; its full sequence is Cytidylate kinase (220 aa).

9–17 is an ATP binding site; it reads GPAASGKST.

It belongs to the cytidylate kinase family. Type 1 subfamily.

It is found in the cytoplasm. It carries out the reaction CMP + ATP = CDP + ADP. The catalysed reaction is dCMP + ATP = dCDP + ADP. The chain is Cytidylate kinase from Thermotoga neapolitana (strain ATCC 49049 / DSM 4359 / NBRC 107923 / NS-E).